Reading from the N-terminus, the 571-residue chain is Proline--tRNA ligase (571 aa).

It belongs to the class-II aminoacyl-tRNA synthetase family. ProS type 1 subfamily. In terms of assembly, homodimer.

It localises to the cytoplasm. The catalysed reaction is tRNA(Pro) + L-proline + ATP = L-prolyl-tRNA(Pro) + AMP + diphosphate. Functionally, catalyzes the attachment of proline to tRNA(Pro) in a two-step reaction: proline is first activated by ATP to form Pro-AMP and then transferred to the acceptor end of tRNA(Pro). As ProRS can inadvertently accommodate and process non-cognate amino acids such as alanine and cysteine, to avoid such errors it has two additional distinct editing activities against alanine. One activity is designated as 'pretransfer' editing and involves the tRNA(Pro)-independent hydrolysis of activated Ala-AMP. The other activity is designated 'posttransfer' editing and involves deacylation of mischarged Ala-tRNA(Pro). The misacylated Cys-tRNA(Pro) is not edited by ProRS. The sequence is that of Proline--tRNA ligase from Actinobacillus succinogenes (strain ATCC 55618 / DSM 22257 / CCUG 43843 / 130Z).